The chain runs to 724 residues: MSLLQLSPLLALLLLLCSSVSETAADYENTWNFYYERPCCTGNDQGNNNYGKHGADHVREFNCGKLYYRTFHMNEDRDTLYVGAMDRVFRVNLQNISSSNCNRDVINLEPTRDDVVSCVSKGKSQIFDCKNHVRVIQSMDQGDRLYVCGTNAHNPKDYVIYANLTHLPRSEYVIGVGLGIAKCPYDPLDNSTAIYVENGNPGGLPGLYSGTNAEFTKADTVIFRTDLYNTSAKRLEYKFKRTLKYDSKWLDKPNFVGSFDIGEYVYFFFRETAVEYINCGKAVYSRIARVCKKDVGGKNLLAHNWATYLKARLNCSISGEFPFYFNEIQSVYQLPSDKSRFFATFTTSTNGLIGSAVCSFHINEIQAAFNGKFKEQSSSNSAWLPVLNSRVPEPRPGTCVNDTSNLPDTVLNFIRSHPLMDKAVNHEHNNPVYYKRDLVFTKLVVDKIRIDILNQEYIVYYVGTNLGRIYKIVQYYRNGESLSKLLDIFEVAPNEAIQVMEISQTRKSLYIGTDHRIKQIDLAMCNRRYDNCFRCVRDPYCGWDKEANTCRPYELDLLQDVANETSDICDSSVLKKKIVVTYGQSVHLGCFVKIPEVLKNEQVTWYHHSKDKGRYEIRYSPTKYIETTERGLVVVSVNEADGGRYDCHLGGSLLCSYNITVDAHRCTPPNKSNDYQKIYSDWCHEFEKYKTAMKSWEKKQAQCSTRQNFSSNQHPNEIFRKPNV.

An N-terminal signal peptide occupies residues Met1–Ala25. One can recognise a Sema domain in the interval Gln45–Leu522. A glycan (N-linked (GlcNAc...) asparagine) is linked at Asn95. Cys118 and Cys129 are disulfide-bonded. Asn163, Asn190, Asn229, and Asn314 each carry an N-linked (GlcNAc...) asparagine glycan. Disulfide bonds link Cys291-Cys399 and Cys315-Cys358. An N-linked (GlcNAc...) asparagine glycan is attached at Asn401. 2 disulfides stabilise this stretch: Cys525–Cys541 and Cys535–Cys550. The region spanning Pro552–Ala663 is the Ig-like C2-type domain. Residue Asn563 is glycosylated (N-linked (GlcNAc...) asparagine). A disulfide bridge connects residues Cys590 and Cys647. Residues Asn658, Asn670, and Asn708 are each glycosylated (N-linked (GlcNAc...) asparagine).

Belongs to the semaphorin family. In terms of assembly, interacts with PlexB. As to expression, transiently expressed by a single large muscle during motoneuron outgrowth and synapse formation.

The protein localises to the secreted. Its function is as follows. Ligand for transmembrane receptor PlexB. Plays a role in growth cone guidance. Required for both proper adult behavior and survival. Can function as a selective target-derived signal that inhibits the formation of specific synaptic terminal arbors. Function in neurons is essential for adult survival, motor neuron survival, and is important for climbing behavior and activity. During embryogenesis, plays an important role in correct salivary gland positioning. The sequence is that of Semaphorin-2A from Drosophila melanogaster (Fruit fly).